We begin with the raw amino-acid sequence, 346 residues long: Enkurin domain-containing protein 1 (346 aa).

Disordered stretches follow at residues 1 to 24 (MCEG…DYYR), 88 to 107 (SGVS…NLRR), and 113 to 132 (RRFQ…PLKA). Phosphoserine is present on serine 91. Basic and acidic residues-rich tracts occupy residues 98–107 (KDHEKENLRR) and 113–125 (RRFQ…REQG). Serine 136 bears the Phosphoserine mark. Residues 251–343 (ERRDLWRKEA…IFSRPKVFVK (93 aa)) enclose the Enkurin domain. Residues 259–280 (EAEARQRSQPDPSMPPGHTLMP) form a disordered region.

As to quaternary structure, interacts with alpha-tubulin. Interacts (via central region) with CCP110 (via N-terminal region); competes with CEP97 for binding to CCP110. In terms of tissue distribution, widely expressed with highest levels in testis and lung.

It localises to the cytoplasm. It is found in the cytoskeleton. The protein resides in the microtubule organizing center. The protein localises to the centrosome. Its subcellular location is the centriole. It localises to the cilium basal body. It is found in the cell projection. The protein resides in the cilium. The protein localises to the spindle. Its subcellular location is the spindle pole. It localises to the cilium axoneme. In terms of biological role, microtubule-binding protein which regulates microtubule organization and stability. Promotes the stability of astral microtubules and facilitates the proper orientation of the mitotic spindle. This allows the oriented division of basal keratinocytes and contributes to epidermal stratification. Required for the assembly of both primary and motile cilia. Destabilizes the interaction between CCP110 and CEP97 by competing with CEP97 for binding to CCP110 which promotes the removal of CCP110 and CEP97 from the mother centriole and allows the initiation of ciliogenesis. The sequence is that of Enkurin domain-containing protein 1 (Enkd1) from Mus musculus (Mouse).